We begin with the raw amino-acid sequence, 291 residues long: Probable 2-(5''-triphosphoribosyl)-3'-dephosphocoenzyme-A synthase (291 aa).

Belongs to the CitG/MdcB family.

The catalysed reaction is 3'-dephospho-CoA + ATP = 2'-(5''-triphospho-alpha-D-ribosyl)-3'-dephospho-CoA + adenine. Functionally, involved in the formation of 2-(5''-phosphoribosyl)-3'-dephosphocoenzyme-A, the prosthetic group of the acyl-carrier protein of the malonate decarboxylase. The sequence is that of Probable 2-(5''-triphosphoribosyl)-3'-dephosphocoenzyme-A synthase from Pseudomonas syringae pv. tomato (strain ATCC BAA-871 / DC3000).